Here is a 727-residue protein sequence, read N- to C-terminus: Elongation factor 2 (727 aa).

A tr-type G domain is found at 19 to 260; sequence DQIRNIGICA…MVVTHLPNPV (242 aa). Residues 28–35, 94–98, and 148–151 contribute to the GTP site; these read AHIDHGKT, DTPGH, and NKVD. The residue at position 603 (H603) is a Diphthamide.

It belongs to the TRAFAC class translation factor GTPase superfamily. Classic translation factor GTPase family. EF-G/EF-2 subfamily.

It localises to the cytoplasm. In terms of biological role, catalyzes the GTP-dependent ribosomal translocation step during translation elongation. During this step, the ribosome changes from the pre-translocational (PRE) to the post-translocational (POST) state as the newly formed A-site-bound peptidyl-tRNA and P-site-bound deacylated tRNA move to the P and E sites, respectively. Catalyzes the coordinated movement of the two tRNA molecules, the mRNA and conformational changes in the ribosome. The protein is Elongation factor 2 of Methanococcus aeolicus (strain ATCC BAA-1280 / DSM 17508 / OCM 812 / Nankai-3).